We begin with the raw amino-acid sequence, 576 residues long: Immunoglobulin mu heavy chain (576 aa).

Q1 carries the pyrrolidone carboxylic acid modification. Ig-like domains follow at residues Q1–C97, P132–C212, P236–S334, P352–S442, and P452–D553. Residues Q1 to V124 form a variable (V) domain, involved in antigen recognition region. Intrachain disulfides connect C22-C97, C153-C212, and C259-C320. N-linked (GlcNAc...) asparagine glycans are attached at residues N74 and N170. The tract at residues S125–Y576 is constant (C) domain. Residues N332, N395, and N402 are each glycosylated (N-linked (GlcNAc...) asparagine). 2 cysteine pairs are disulfide-bonded: C367-C426 and C474-C536. An N-linked (GlcNAc...) asparagine glycan is attached at N563.

As to quaternary structure, immunoglobulins are composed of two identical heavy chains and two identical light chains; disulfide-linked. It is found almost exclusively as a homopentamer in the serum. Membrane-bound IgM molecules are non-covalently associated with heterodimer of CD79A and CD79B.

The protein localises to the secreted. It localises to the cell membrane. Immunoglobulins, also known as antibodies, are membrane-bound or secreted glycoproteins produced by B lymphocytes. In the recognition phase of humoral immunity, the membrane-bound immunoglobulins serve as receptors which, upon binding of a specific antigen, trigger the clonal expansion and differentiation of B lymphocytes into immunoglobulins-secreting plasma cells. Secreted immunoglobulins mediate the effector phase of humoral immunity, which results in the elimination of bound antigens. The antigen binding site is formed by the variable domain of one heavy chain, together with that of its associated light chain. Thus, each immunoglobulin has two antigen binding sites with remarkable affinity for a particular antigen. The variable domains are assembled by a process called V-(D)-J rearrangement and can then be subjected to somatic hypermutations which, after exposure to antigen and selection, allow affinity maturation for a particular antigen. IgM antibodies play an important role in primary defense mechanisms. They have been shown to be involved in early recognition of external invaders like bacteria and viruses, cellular waste and modified self, as well as in recognition and elimination of precancerous and cancerous lesions. The membrane-bound form is found in the majority of normal B cells alongside with IgD. Membrane-bound IgM induces the phosphorylation of CD79A and CD79B by the Src family of protein tyrosine kinases. It may cause death of cells by apoptosis. It is also found in soluble form, which represents about 30% of the total serum immunoglobulins where it is found almost exclusively as a homopentamer. After the antigen binds to the B cell receptor, the secreted form is secreted in large amounts (, PubMed:16895553). This is Immunoglobulin mu heavy chain from Homo sapiens (Human).